Reading from the N-terminus, the 337-residue chain is HTH-type transcriptional repressor PurR (337 aa).

Residues 2–56 (ATIKDVAKLAAVSTTTVSHVINKTRFVAEATQKRVWEAVEELNYAPSAVARSLKC) enclose the HTH lacI-type domain. Positions 4-23 (IKDVAKLAAVSTTTVSHVIN) form a DNA-binding region, H-T-H motif. Residues 48–56 (SAVARSLKC) mediate DNA binding. Residues phenylalanine 73, lysine 189, threonine 191, phenylalanine 220, and aspartate 276 each coordinate hypoxanthine.

Homodimer.

The protein operates within purine metabolism; purine nucleotide biosynthesis [regulation]. Is the main repressor of the genes involved in the de novo synthesis of purine nucleotides, regulating purB, purC, purEK, purF, purHD, purL, purMN and guaBA expression. PurR is allosterically activated to bind its cognate DNA by binding the purine corepressors, hypoxanthine or guanine, thereby effecting transcription repression. This is HTH-type transcriptional repressor PurR from Aliivibrio fischeri (strain MJ11) (Vibrio fischeri).